A 1044-amino-acid chain; its full sequence is Translation initiation factor IF-2 (1044 aa).

Residues 31–425 (VRSASSTVEP…RKSKRAKRQE (395 aa)) are disordered. 2 stretches are compositionally biased toward pro residues: residues 77–98 (GPAP…PQPA) and 106–116 (APAPAPAPRPA). Residues 117–148 (EPAANPAPAAPPAFQAPAPAPAERPAAAQRPA) show a composition bias toward low complexity. The span at 168-185 (GGPGQGPRPGARPGGPGA) shows a compositional bias: gly residues. The segment covering 204 to 247 (GPGDRPERSERPDRGDRPQGDRPRSDRPQGERQQGDRPQGDRPG) has biased composition (basic and acidic residues). Residues 285–304 (GGAPRPGNNPFASNQGMPRP) are compositionally biased toward low complexity. Pro residues predominate over residues 305–328 (QGGPRPTPAGPGGPRPGGPRPNPG). Low complexity predominate over residues 329–338 (MMPARPTVGR). Positions 339-409 (PGAGPGAGRP…GTQGAFGRAG (71 aa)) are enriched in gly residues. Over residues 413–422 (VRGRKSKRAK) the composition is skewed to basic residues. The region spanning 537-709 (ARPPVVTVMG…VLLTADASLD (173 aa)) is the tr-type G domain. The interval 546-553 (GHVDHGKT) is G1. 546-553 (GHVDHGKT) is a GTP binding site. The tract at residues 571-575 (GITQH) is G2. The G3 stretch occupies residues 596–599 (DTPG). GTP is bound by residues 596 to 600 (DTPGH) and 650 to 653 (NKVD). The tract at residues 650–653 (NKVD) is G4. The tract at residues 686-688 (SAR) is G5.

It belongs to the TRAFAC class translation factor GTPase superfamily. Classic translation factor GTPase family. IF-2 subfamily.

The protein localises to the cytoplasm. In terms of biological role, one of the essential components for the initiation of protein synthesis. Protects formylmethionyl-tRNA from spontaneous hydrolysis and promotes its binding to the 30S ribosomal subunits. Also involved in the hydrolysis of GTP during the formation of the 70S ribosomal complex. This is Translation initiation factor IF-2 from Kineococcus radiotolerans (strain ATCC BAA-149 / DSM 14245 / SRS30216).